Consider the following 124-residue polypeptide: Small ribosomal subunit protein uS12 (124 aa).

Position 89 is a 3-methylthioaspartic acid (D89).

The protein belongs to the universal ribosomal protein uS12 family. As to quaternary structure, part of the 30S ribosomal subunit. Contacts proteins S8 and S17. May interact with IF1 in the 30S initiation complex.

In terms of biological role, with S4 and S5 plays an important role in translational accuracy. Functionally, interacts with and stabilizes bases of the 16S rRNA that are involved in tRNA selection in the A site and with the mRNA backbone. Located at the interface of the 30S and 50S subunits, it traverses the body of the 30S subunit contacting proteins on the other side and probably holding the rRNA structure together. The combined cluster of proteins S8, S12 and S17 appears to hold together the shoulder and platform of the 30S subunit. This Pasteurella multocida (strain Pm70) protein is Small ribosomal subunit protein uS12.